Consider the following 469-residue polypeptide: MAPPHFLLVTFPAQGHVNPSLRFARRLIKRTGARVTFVTCVSVFHNSMIANHNKVENLSFLTFSDGFDDGGISTYEDRQKRSVNLKVNGDKALSDFIEATKNGDSPVTCLIYTILLNWAPKVARRFQLPSALLWIQPALVFNIYYTHFMGNKSVFELPNLSSLEIRDLPSFLTPSNTNKGAYDAFQEMMEFLIKETKPKILINTFDSLEPEALTAFPNIDMVAVGPLLPTEIFSGSTNKSVKDQSSSYTLWLDSKTESSVIYVSFGTMVELSKKQIEELARALIEGKRPFLWVITDKSNRETKTEGEEETEIEKIAGFRHELEEVGMIVSWCSQIEVLSHRAVGCFVTHCGWSSTLESLVLGVPVVAFPMWSDQPTNAKLLEESWKTGVRVRENKDGLVERGEIRRCLEAVMEEKSVELRENAKKWKRLAMEAGREGGSSDKNMEAFVEDICGESLIQNLCEAEEVKVK.

The active-site Proton acceptor is histidine 16. Histidine 16 contacts an anthocyanidin. Residues glutamine 334, histidine 349, tryptophan 352, serine 354, glutamate 357, aspartate 373, and glutamine 374 each coordinate UDP-alpha-D-glucose.

It belongs to the UDP-glycosyltransferase family. In terms of assembly, interacts with CALS1, ROP1 and phragmoplastin.

It is found in the cytoplasm. The protein localises to the perinuclear region. Its subcellular location is the cytoskeleton. It localises to the phragmoplast. It catalyses the reaction (indol-3-yl)acetate + UDP-alpha-D-glucose = 1-O-(indol-3-ylacetyl)-beta-D-glucose + UDP. It participates in plant hormone metabolism; auxin conjugation. Its function is as follows. Possesses low catalytic activity on indole-3-acetic acid (IAA) in vitro. May transfer UDP-glucose from sucrose synthase to callose synthase for the synthesis of callose at the forming cell plate during cytokinesis. Has high affinity for 4-aminobenzoate. Catalyzes the formation of 4-aminobenzoate glucose ester which represents a storage form of 4-aminobenzoate in the vacuole. Is the major source of this activity in the plant. Also active in vitro on benzoates and benzoate derivatives. The sequence is that of UDP-glycosyltransferase 75B1 (UGT75B1) from Arabidopsis thaliana (Mouse-ear cress).